A 198-amino-acid chain; its full sequence is HTH-type transcriptional regulator BetI (198 aa).

The HTH tetR-type domain occupies 8–68 (PLRRRELIDA…ATMRHLLREL (61 aa)). The H-T-H motif DNA-binding region spans 31–50 (TVAQIAHEAGVSPALAHHYF).

It functions in the pathway amine and polyamine biosynthesis; betaine biosynthesis via choline pathway [regulation]. Its function is as follows. Repressor involved in the biosynthesis of the osmoprotectant glycine betaine. It represses transcription of the choline transporter BetT and the genes of BetAB involved in the synthesis of glycine betaine. This is HTH-type transcriptional regulator BetI from Brucella suis biovar 1 (strain 1330).